The sequence spans 423 residues: MSKASTFSAPKGVPDYVPPQSSEFVAVRDGLTRAARLAGYGHIELPIFEDTGLFARGVGESTDVVSKEMYTFADRGDRSVTLRPEGTAGVMRAVIEHGLDRGQLPVKLSYAGPFFRYERPQAGRYRQLQQVGVEAIGVDDPALDAEVIAVADAGFRGLGLEGFRLEITSLGDDTCRPQYRERLQEFLFALPLDEETRRRAEINPLRVLDDKRKEVREMTADAPLMLDHLSDTAKAHFDEVLAHLDALGVPYVVNPRMVRGLDYYTKTTFEFVHDGLGAQSGIGGGGRYDGLMAQLGGQPLSGIGFGLGVDRTVLALAAEGKTAGSTARCEVFGVPLGEEAKAKLVVIAQQLRAQGIRVDLAYGNRGVKGAMKAADRSGAALALVLGDRDIAEGTVGIKNLATGDQESVSSADVLARVGAILGA.

The protein belongs to the class-II aminoacyl-tRNA synthetase family. Homodimer.

It localises to the cytoplasm. The catalysed reaction is tRNA(His) + L-histidine + ATP = L-histidyl-tRNA(His) + AMP + diphosphate + H(+). The polypeptide is Histidine--tRNA ligase (Rhodococcus opacus (strain B4)).